Reading from the N-terminus, the 817-residue chain is Two pore calcium channel protein 1 (817 aa).

The Cytoplasmic segment spans residues 1-113 (MAVSLDDDVP…VHNHFFYMME (113 aa)). A disordered region spans residues 20–65 (SAPLPPSNSLGQEQLPSKNGGSHSIHNSQVPSLVSGADSPPSSPTG). The segment covering 26–51 (SNSLGQEQLPSKNGGSHSIHNSQVPS) has biased composition (polar residues). The chain crosses the membrane as a helical span at residues 114–134 (LLTALLLLLLSLCESPAVPVL). At 135 to 137 (KLH) the chain is on the extracellular side. A helical transmembrane segment spans residues 138 to 158 (TYVHATLELFALMVVVFELCM). Over 159–172 (KLRWLGFHTFVRHK) the chain is Cytoplasmic. Residues 173 to 193 (RTMVKTSVLVVQFIEAIVVLV) traverse the membrane as a helical segment. Residues 194–202 (RQTSHVRVT) are Extracellular-facing. Residues 203-221 (RALRCIFLVDCRYCGGVRR) form a helical membrane-spanning segment. Residues 222–235 (NLRQIFQSLPPFMD) lie on the Cytoplasmic side of the membrane. A helical transmembrane segment spans residues 236–256 (ILLLLLFFMIIFAILGFYLFS). Topologically, residues 257–263 (TNPSDPY) are extracellular. Residues 264 to 287 (FSTLENSIVNLFVLLTTANFPDVM) constitute an intramembrane region (helical; Pore-forming). Residues 288–298 (MPSYSRNPWSC) lie on the Extracellular side of the membrane. The helical transmembrane segment at 299-319 (VFFIVYLSIELYFIMNLLLAV) threads the bilayer. The Cytoplasmic portion of the chain corresponds to 320 to 445 (VFDTFNDIEK…NILVNSKAFQ (126 aa)). A helical membrane pass occupies residues 446-466 (YFMYLVVAVNGVWILVETFML). The Extracellular segment spans residues 467–480 (KGGNFTSKHVPWSY). A glycan (N-linked (GlcNAc...) asparagine) is linked at asparagine 470. The helical transmembrane segment at 481-501 (LVFLTIYGVELFMKVAGLGPV) threads the bilayer. Topologically, residues 502-504 (EYL) are cytoplasmic. The chain crosses the membrane as a helical span at residues 505 to 527 (SSGWNLFDFSVTAFAFLGLLALT). The Extracellular segment spans residues 528 to 535 (LNMEPFYF). The chain crosses the membrane as a helical span at residues 536–550 (IVVLRPLQLLRLFKL). The Cytoplasmic segment spans residues 551–569 (KKRYRNVLDTMFELLPRMA). A helical membrane pass occupies residues 570–590 (SLGLTLLTFYYSFAIVGMEFF). Topologically, residues 591-630 (NGRLTPNCCNTSTVADAYRFINHTVGNKTKVEEGYYYLNN) are extracellular. Positions 631–654 (FDNILNSFVTLFELTVVNNWYIIM) form an intramembrane region, helical; Pore-forming. Over 655–671 (EGVTSQTSHWSRLYFMT) the chain is Extracellular. A helical membrane pass occupies residues 672 to 692 (FYIVTMVVMTIIVAFILEAFV). Topologically, residues 693–817 (FRMNYSRKSQ…GSRQRSQTVT (125 aa)) are cytoplasmic. Residues 770–794 (SLKMYQEEIQEWYEEHAREQEQQKL) are a coiled coil. The disordered stretch occupies residues 785-817 (HAREQEQQKLRGSVPGPAAQQPPGSRQRSQTVT). Polar residues predominate over residues 806-817 (PPGSRQRSQTVT).

The protein belongs to the calcium channel alpha-1 subunit (TC 1.A.1.11) family. Two pore calcium channel subfamily. Dimer. Interacts with MTOR; the interaction is required for TPCN1 ATP sensitivity. Interacts with STX7, STX8 and STX12. Interacts with JPT2. Found in a complex with LSM12, TPCN1 and TPCN2. Post-translationally, N-glycosylated. In terms of tissue distribution, mainly expressed in epithelial tissues like lung, kidney, colon, spleen and liver (at protein level).

The protein localises to the lysosome membrane. Its subcellular location is the endosome membrane. It is found in the early endosome membrane. The protein resides in the recycling endosome membrane. It carries out the reaction Na(+)(in) = Na(+)(out). The catalysed reaction is Ca(2+)(in) = Ca(2+)(out). Its activity is regulated as follows. Na(+) current is inhibited by ATP in a MTORC-dependent manner. ATP sensitivity is independent of PI(3,5)P2. Probably regulated by Mg(2+) ions, cytosolic Mg(2+) selectively inhibits outward current while lysosomal Mg(2+) modestly inhibits both the outward and inward currents. In the absence of Mg(2+), NAADP readily activates TPCN2, with properties similar to PI(3,5)P2. Both current elicited by PI(3,5)P2 as well as NAADP are inhibited by tetrandrine. Its function is as follows. Intracellular channel initially characterized as a non-selective Ca(2+)-permeable channel activated by NAADP (nicotinic acid adenine dinucleotide phosphate), it is also a voltage-gated highly-selective Na(+) channel activated directly by PI(3,5)P2 (phosphatidylinositol 3,5-bisphosphate) that senses pH changes and confers electrical excitability to organelles. Localizes to the early and recycling endosomes membranes where it plays a role in the uptake and processing of proteins and regulates organellar membrane excitability, membrane trafficking and pH homeostasis. Ion selectivity is not fixed but rather agonist-dependent and under defined ionic conditions, can be readily activated by both NAADP and PI(3,5)P2. Required for mTOR-dependent nutrient sensing. In Mus musculus (Mouse), this protein is Two pore calcium channel protein 1.